Reading from the N-terminus, the 261-residue chain is Hemin import ATP-binding protein HmuV (261 aa).

In terms of domain architecture, ABC transporter spans 3–239; that stretch reads LDAADITVKL…AILSQAYGCA (237 aa). Residue 35 to 42 participates in ATP binding; that stretch reads GPNGSGKT.

The protein belongs to the ABC transporter superfamily. Heme (hemin) importer (TC 3.A.1.14.5) family. The complex is composed of two ATP-binding proteins (HmuV), two transmembrane proteins (HmuU) and a solute-binding protein (HmuT).

The protein localises to the cell inner membrane. Its function is as follows. Part of the ABC transporter complex HmuTUV involved in hemin import. Responsible for energy coupling to the transport system. The chain is Hemin import ATP-binding protein HmuV from Roseobacter denitrificans (strain ATCC 33942 / OCh 114) (Erythrobacter sp. (strain OCh 114)).